The primary structure comprises 337 residues: Heme A synthase (337 aa).

Helical transmembrane passes span 6–26, 93–113, 118–138, 154–174, and 192–212; these read ITKW…IGGI, GRIT…KDVI, ILPY…GWYM, LAFH…QLIK, and LIFS…GAMV. H256 serves as a coordination point for heme. A run of 3 helical transmembrane segments spans residues 258 to 278, 285 to 305, and 308 to 328; these read LGGY…LKIE, IAYF…ITLL, and VPII…SIII. A heme-binding site is contributed by H316.

This sequence belongs to the COX15/CtaA family. Type 2 subfamily. As to quaternary structure, interacts with CtaB. Heme b serves as cofactor.

The protein localises to the cell membrane. The catalysed reaction is Fe(II)-heme o + 2 A + H2O = Fe(II)-heme a + 2 AH2. The protein operates within porphyrin-containing compound metabolism; heme A biosynthesis; heme A from heme O: step 1/1. Functionally, catalyzes the conversion of heme O to heme A by two successive hydroxylations of the methyl group at C8. The first hydroxylation forms heme I, the second hydroxylation results in an unstable dihydroxymethyl group, which spontaneously dehydrates, resulting in the formyl group of heme A. In Rickettsia felis (strain ATCC VR-1525 / URRWXCal2) (Rickettsia azadi), this protein is Heme A synthase.